A 711-amino-acid chain; its full sequence is DNA topoisomerase 3 (711 aa).

The 134-residue stretch at 2–135 (KSLILAEKPS…LRRLWISSVT (134 aa)) folds into the Toprim domain. Residues Glu-8 and Asp-104 each contribute to the Mg(2+) site. In terms of domain architecture, Topo IA-type catalytic spans 152 to 580 (YNDLYYAALA…EMKDFTKDVV (429 aa)). An interaction with DNA region spans residues 186-191 (SLGRVQ). The active-site O-(5'-phospho-DNA)-tyrosine intermediate is Tyr-305. Positions 691 to 711 (MNKNEGLDNNPFKDALKNLNL) are disordered.

Belongs to the type IA topoisomerase family. The cofactor is Mg(2+).

It carries out the reaction ATP-independent breakage of single-stranded DNA, followed by passage and rejoining.. Functionally, releases the supercoiling and torsional tension of DNA, which is introduced during the DNA replication and transcription, by transiently cleaving and rejoining one strand of the DNA duplex. Introduces a single-strand break via transesterification at a target site in duplex DNA. The scissile phosphodiester is attacked by the catalytic tyrosine of the enzyme, resulting in the formation of a DNA-(5'-phosphotyrosyl)-enzyme intermediate and the expulsion of a 3'-OH DNA strand. The free DNA strand then undergoes passage around the unbroken strand, thus removing DNA supercoils. Finally, in the religation step, the DNA 3'-OH attacks the covalent intermediate to expel the active-site tyrosine and restore the DNA phosphodiester backbone. This Staphylococcus aureus (strain MRSA252) protein is DNA topoisomerase 3.